Reading from the N-terminus, the 260-residue chain is Indole-3-glycerol phosphate synthase (260 aa).

This sequence belongs to the TrpC family.

It catalyses the reaction 1-(2-carboxyphenylamino)-1-deoxy-D-ribulose 5-phosphate + H(+) = (1S,2R)-1-C-(indol-3-yl)glycerol 3-phosphate + CO2 + H2O. Its pathway is amino-acid biosynthesis; L-tryptophan biosynthesis; L-tryptophan from chorismate: step 4/5. This chain is Indole-3-glycerol phosphate synthase, found in Thermoanaerobacter sp. (strain X514).